Reading from the N-terminus, the 414-residue chain is WW domain-containing oxidoreductase (414 aa).

The segment at 1-23 is disordered; that stretch reads MAALKYAGLEDTDSEEELPPGWE. Residues 16–49 enclose the WW 1 domain; the sequence is EELPPGWEERTTKDGWVYYANHLEEKTQWEHPKS. The short motif at 50 to 55 is the Nuclear localization signal element; it reads GKRKRV. Residues 57–90 form the WW 2 domain; it reads GGLPYGWEQETDENGQVYFVDHINKRTTYLDPRL. 131-137 is an NADP(+) binding site; sequence GANSGIG. Ser260 lines the substrate pocket. The active-site Proton acceptor is Tyr293.

Belongs to the short-chain dehydrogenases/reductases (SDR) family.

It is found in the cytoplasm. Its subcellular location is the mitochondrion. The protein resides in the golgi apparatus. The protein localises to the lysosome. Putative oxidoreductase. Acts as a tumor suppressor and plays a role in apoptosis. May function synergistically with p53/TP53 to control genotoxic stress-induced cell death. Plays a role in TGFB1 signaling and TGFB1-mediated cell death. May also play a role in tumor necrosis factor (TNF)-mediated cell death. Required for normal bone development. Inhibits Wnt signaling. This Gallus gallus (Chicken) protein is WW domain-containing oxidoreductase (WWOX).